Reading from the N-terminus, the 191-residue chain is NAD(P)H-dependent FMN reductase LOT6 (191 aa).

Residues Arg11, 94–97 (QYNW), and Tyr124 each bind FMN.

Homodimer.

The protein localises to the cytoplasm. It localises to the nucleus. The enzyme catalyses FMNH2 + NADP(+) = FMN + NADPH + 2 H(+). It carries out the reaction FMNH2 + NAD(+) = FMN + NADH + 2 H(+). Has several reductase activities that are NAD(P)H-dependent and involve FMN as a cofactor, ferricyanide being the best substrate for reduction. May be involved in ferric iron assimilation. This is NAD(P)H-dependent FMN reductase LOT6 (LOT6) from Saccharomyces cerevisiae (strain ATCC 204508 / S288c) (Baker's yeast).